The sequence spans 408 residues: Tryptophan synthase beta chain (408 aa).

Lys90 carries the N6-(pyridoxal phosphate)lysine modification.

The protein belongs to the TrpB family. Tetramer of two alpha and two beta chains. Pyridoxal 5'-phosphate is required as a cofactor.

It catalyses the reaction (1S,2R)-1-C-(indol-3-yl)glycerol 3-phosphate + L-serine = D-glyceraldehyde 3-phosphate + L-tryptophan + H2O. It participates in amino-acid biosynthesis; L-tryptophan biosynthesis; L-tryptophan from chorismate: step 5/5. The beta subunit is responsible for the synthesis of L-tryptophan from indole and L-serine. This Bacillus licheniformis (strain ATCC 14580 / DSM 13 / JCM 2505 / CCUG 7422 / NBRC 12200 / NCIMB 9375 / NCTC 10341 / NRRL NRS-1264 / Gibson 46) protein is Tryptophan synthase beta chain.